A 99-amino-acid chain; its full sequence is Protein Tat (99 aa).

The disordered stretch occupies residues 1 to 22 (MDPVDPNLEPWNHPGSQPRTPC). An interaction with human CREBBP region spans residues 1-24 (MDPVDPNLEPWNHPGSQPRTPCNK). A transactivation region spans residues 1–48 (MDPVDPNLEPWNHPGSQPRTPCNKCHCKKCCYHCPVCFLNKGLGISYG). Zn(2+)-binding residues include cysteine 22, cysteine 25, and cysteine 27. Residues 22–37 (CNKCHCKKCCYHCPVC) form a cysteine-rich region. Lysine 28 carries the post-translational modification N6-acetyllysine; by host PCAF. 4 residues coordinate Zn(2+): cysteine 30, histidine 33, cysteine 34, and cysteine 37. The core stretch occupies residues 38–48 (FLNKGLGISYG). Residues 48 to 99 (GRKKRRQRRGPPQGGQAHQVPIPKQPSSQPRGDPTGPKEQKKKVESEAETDP) form a disordered region. The short motif at 49–57 (RKKRRQRRG) is the Nuclear localization signal, RNA-binding (TAR), and protein transduction element. Residues 49 to 86 (RKKRRQRRGPPQGGQAHQVPIPKQPSSQPRGDPTGPKE) are interaction with the host capping enzyme RNGTT. An N6-acetyllysine; by host EP300 and GCN5L2 mark is found at lysine 50 and lysine 51. Asymmetric dimethylarginine; by host PRMT6 occurs at positions 52 and 53. A Glycyl lysine isopeptide (Lys-Gly) (interchain with G-Cter in ubiquitin) cross-link involves residue lysine 71. The short motif at 78 to 80 (RGD) is the Cell attachment site element. Over residues 83 to 93 (GPKEQKKKVES) the composition is skewed to basic and acidic residues.

Belongs to the lentiviruses Tat family. As to quaternary structure, interacts with host CCNT1. Associates with the P-TEFb complex composed at least of Tat, P-TEFb (CDK9 and CCNT1), TAR RNA, RNA Pol II. Recruits the HATs CREBBP, TAF1/TFIID, EP300, PCAF and GCN5L2. Interacts with host KAT5/Tip60; this interaction targets the latter to degradation. Interacts with the host deacetylase SIRT1. Interacts with host capping enzyme RNGTT; this interaction stimulates RNGTT. Binds to host KDR, and to the host integrins ITGAV/ITGB3 and ITGA5/ITGB1. Interacts with host KPNB1/importin beta-1 without previous binding to KPNA1/importin alpha-1. Interacts with EIF2AK2. Interacts with host nucleosome assembly protein NAP1L1; this interaction may be required for the transport of Tat within the nucleus, since the two proteins interact at the nuclear rim. Interacts with host C1QBP/SF2P32; this interaction involves lysine-acetylated Tat. Interacts with the host chemokine receptors CCR2, CCR3 and CXCR4. Interacts with host DPP4/CD26; this interaction may trigger an anti-proliferative effect. Interacts with host LDLR. Interacts with the host extracellular matrix metalloproteinase MMP1. Interacts with host PRMT6; this interaction mediates Tat's methylation. Interacts with, and is ubiquitinated by MDM2/Hdm2. Interacts with host PSMC3 and HTATIP2. Interacts with STAB1; this interaction may overcome SATB1-mediated repression of IL2 and IL2RA (interleukin) in T cells by binding to the same domain than HDAC1. Interacts (when acetylated) with human CDK13, thereby increasing HIV-1 mRNA splicing and promoting the production of the doubly spliced HIV-1 protein Nef. Interacts with host TBP; this interaction modulates the activity of transcriptional pre-initiation complex. Interacts with host RELA. Interacts with host PLSCR1; this interaction negatively regulates Tat transactivation activity by altering its subcellular distribution. Post-translationally, asymmetrical arginine methylation by host PRMT6 seems to diminish the transactivation capacity of Tat and affects the interaction with host CCNT1. In terms of processing, acetylation by EP300, CREBBP, GCN5L2/GCN5 and PCAF regulates the transactivation activity of Tat. EP300-mediated acetylation of Lys-50 promotes dissociation of Tat from the TAR RNA through the competitive binding to PCAF's bromodomain. In addition, the non-acetylated Tat's N-terminus can also interact with PCAF. PCAF-mediated acetylation of Lys-28 enhances Tat's binding to CCNT1. Lys-50 is deacetylated by SIRT1. Polyubiquitination by host MDM2 does not target Tat to degradation, but activates its transactivation function and fosters interaction with CCNT1 and TAR RNA. Post-translationally, phosphorylated by EIF2AK2 on serine and threonine residues adjacent to the basic region important for TAR RNA binding and function. Phosphorylation of Tat by EIF2AK2 is dependent on the prior activation of EIF2AK2 by dsRNA.

It is found in the host nucleus. It localises to the host nucleolus. The protein resides in the host cytoplasm. Its subcellular location is the secreted. Transcriptional activator that increases RNA Pol II processivity, thereby increasing the level of full-length viral transcripts. Recognizes a hairpin structure at the 5'-LTR of the nascent viral mRNAs referred to as the transactivation responsive RNA element (TAR) and recruits the cyclin T1-CDK9 complex (P-TEFb complex) that will in turn hyperphosphorylate the RNA polymerase II to allow efficient elongation. The CDK9 component of P-TEFb and other Tat-activated kinases hyperphosphorylate the C-terminus of RNA Pol II that becomes stabilized and much more processive. Other factors such as HTATSF1/Tat-SF1, SUPT5H/SPT5, and HTATIP2 are also important for Tat's function. Besides its effect on RNA Pol II processivity, Tat induces chromatin remodeling of proviral genes by recruiting the histone acetyltransferases (HATs) CREBBP, EP300 and PCAF to the chromatin. This also contributes to the increase in proviral transcription rate, especially when the provirus integrates in transcriptionally silent region of the host genome. To ensure maximal activation of the LTR, Tat mediates nuclear translocation of NF-kappa-B by interacting with host RELA. Through its interaction with host TBP, Tat may also modulate transcription initiation. Tat can reactivate a latently infected cell by penetrating in it and transactivating its LTR promoter. In the cytoplasm, Tat is thought to act as a translational activator of HIV-1 mRNAs. Functionally, extracellular circulating Tat can be endocytosed by surrounding uninfected cells via the binding to several surface receptors such as CD26, CXCR4, heparan sulfate proteoglycans (HSPG) or LDLR. Neurons are rarely infected, but they internalize Tat via their LDLR. Through its interaction with nuclear HATs, Tat is potentially able to control the acetylation-dependent cellular gene expression. Modulates the expression of many cellular genes involved in cell survival, proliferation or in coding for cytokines or cytokine receptors. Tat plays a role in T-cell and neurons apoptosis. Tat induced neurotoxicity and apoptosis probably contribute to neuroAIDS. Circulating Tat also acts as a chemokine-like and/or growth factor-like molecule that binds to specific receptors on the surface of the cells, affecting many cellular pathways. In the vascular system, Tat binds to ITGAV/ITGB3 and ITGA5/ITGB1 integrins dimers at the surface of endothelial cells and competes with bFGF for heparin-binding sites, leading to an excess of soluble bFGF. The sequence is that of Protein Tat from Homo sapiens (Human).